Reading from the N-terminus, the 116-residue chain is UPF0329 protein ECU05_1650 (116 aa).

It belongs to the UPF0329 family.

The chain is UPF0329 protein ECU05_1650 from Encephalitozoon cuniculi (strain GB-M1) (Microsporidian parasite).